The following is a 493-amino-acid chain: Ketol-acid reductoisomerase (NADP(+)) (493 aa).

A KARI N-terminal Rossmann domain is found at Leu-17–Ser-208. NADP(+) contacts are provided by residues Cys-45–Gln-48, Arg-68, Arg-76, Ser-78, and Asp-108–Gln-110. His-132 is an active-site residue. Gly-158 provides a ligand contact to NADP(+). KARI C-terminal knotted domains lie at Ser-209 to Ser-344 and Ser-345 to Met-486. Mg(2+) contacts are provided by Asp-217, Glu-221, Glu-389, and Glu-393. Ser-414 is a binding site for substrate.

Belongs to the ketol-acid reductoisomerase family. It depends on Mg(2+) as a cofactor.

It carries out the reaction (2R)-2,3-dihydroxy-3-methylbutanoate + NADP(+) = (2S)-2-acetolactate + NADPH + H(+). The catalysed reaction is (2R,3R)-2,3-dihydroxy-3-methylpentanoate + NADP(+) = (S)-2-ethyl-2-hydroxy-3-oxobutanoate + NADPH + H(+). It functions in the pathway amino-acid biosynthesis; L-isoleucine biosynthesis; L-isoleucine from 2-oxobutanoate: step 2/4. Its pathway is amino-acid biosynthesis; L-valine biosynthesis; L-valine from pyruvate: step 2/4. Functionally, involved in the biosynthesis of branched-chain amino acids (BCAA). Catalyzes an alkyl-migration followed by a ketol-acid reduction of (S)-2-acetolactate (S2AL) to yield (R)-2,3-dihydroxy-isovalerate. In the isomerase reaction, S2AL is rearranged via a Mg-dependent methyl migration to produce 3-hydroxy-3-methyl-2-ketobutyrate (HMKB). In the reductase reaction, this 2-ketoacid undergoes a metal-dependent reduction by NADPH to yield (R)-2,3-dihydroxy-isovalerate. The polypeptide is Ketol-acid reductoisomerase (NADP(+)) (Shewanella amazonensis (strain ATCC BAA-1098 / SB2B)).